Here is a 467-residue protein sequence, read N- to C-terminus: Serine/threonine-protein kinase US3 homolog (467 aa).

Residues 64-155 (GPEVAPPART…PAGGVTREEA (92 aa)) form a disordered region. Positions 99-111 (NERRAATGDEKES) are enriched in basic and acidic residues. Residues 117–144 (NESESESESESESESGADDGDWDDDDDA) are compositionally biased toward acidic residues. The region spanning 164–462 (FRIIRRLTPG…AAELLEHPVF (299 aa)) is the Protein kinase domain. ATP contacts are provided by residues 170–178 (LTPGSEGRV) and Lys194. Asp279 acts as the Proton acceptor in catalysis.

This sequence belongs to the protein kinase superfamily. Ser/Thr protein kinase family. Phosphorylated by UL13 homolog; this phosphorylation regulates subsequent phosphorylation of UL31 and UL34 homologs by US3. Autophosphorylated.

Its subcellular location is the host cytoplasm. The protein resides in the host nucleus. The catalysed reaction is L-seryl-[protein] + ATP = O-phospho-L-seryl-[protein] + ADP + H(+). It catalyses the reaction L-threonyl-[protein] + ATP = O-phospho-L-threonyl-[protein] + ADP + H(+). Functionally, multifunctional serine/threonine kinase that plays a role in several processes including egress of virus particles from the nucleus, modulation of the actin cytoskeleton and inhibition of apoptosis. Phosphorylates UL31 and UL34 homologs, two critical regulators of capsid budding from nucleus to endoplasmic reticulum, thereby facilitating virion egress. Modulates and redistributes host components of the nuclear envelope, including LMNA, emerin/EMD and the nuclear matrix protein MATR3. Phosphorylates envelope glycoprotein B (gB), probably to direct it to the cell surface. Promotes virus intracellular spread by restructuring host cell cytoskeleton. Blocks host apoptosis to extend cell survival and allow efficient viral replication. Promotes viral gene expression by phosphorylating host HDAC2 to reduce viral genome silencing. This is Serine/threonine-protein kinase US3 homolog from Bos taurus (Bovine).